The primary structure comprises 396 residues: Phosphoglycerate kinase (396 aa).

Residues 21–23 (DFN), Arg-37, 60–63 (HLGR), Arg-121, and Arg-154 each bind substrate. ATP is bound by residues Lys-205, Gly-296, Glu-327, and 353-356 (GGDS).

This sequence belongs to the phosphoglycerate kinase family. In terms of assembly, monomer.

The protein localises to the cytoplasm. It carries out the reaction (2R)-3-phosphoglycerate + ATP = (2R)-3-phospho-glyceroyl phosphate + ADP. It functions in the pathway carbohydrate degradation; glycolysis; pyruvate from D-glyceraldehyde 3-phosphate: step 2/5. This is Phosphoglycerate kinase from Anaeromyxobacter dehalogenans (strain 2CP-C).